The following is a 100-amino-acid chain: Integration host factor subunit alpha (100 aa).

A disordered region spans residues 53-72; the sequence is FDLRDKRQRPGRNPKTGEEI.

Belongs to the bacterial histone-like protein family. In terms of assembly, heterodimer of an alpha and a beta chain.

This protein is one of the two subunits of integration host factor, a specific DNA-binding protein that functions in genetic recombination as well as in transcriptional and translational control. This is Integration host factor subunit alpha from Pseudomonas putida (strain ATCC 700007 / DSM 6899 / JCM 31910 / BCRC 17059 / LMG 24140 / F1).